The following is a 123-amino-acid chain: Glycophorin-B (123 aa).

The N-terminal stretch at 1–19 (MYGKIIFVLLLSEIVSISA) is a signal peptide. Residues 93–113 (VVIILIILCVMAGVIGTILLI) form a helical membrane-spanning segment.

It belongs to the glycophorin-A family. In terms of assembly, component of the ankyrin-1 complex in the erythrocyte, composed of ANK1, RHCE, RHAG, SLC4A1, EPB42, GYPA, GYPB and AQP1. Interacts (via the N-terminal) with RHAG; this interaction bridges the (RHAG)2(RHCE) heterotrimer with the SLC4A1 Band 3 I dimer complexed with GYPA. Post-translationally, the N-terminal extracellular domain is heavily glycosylated on serine and threonine residues.

The protein resides in the cell membrane. Functionally, component of the ankyrin-1 complex, a multiprotein complex involved in the stability and shape of the erythrocyte membrane. The sequence is that of Glycophorin-B from Pan troglodytes (Chimpanzee).